We begin with the raw amino-acid sequence, 526 residues long: Histidine ammonia-lyase (526 aa).

The 5-imidazolinone (Ala-Gly) cross-link spans 143-145 (ASG). 2,3-didehydroalanine (Ser) is present on serine 144.

It belongs to the PAL/histidase family. Post-translationally, contains an active site 4-methylidene-imidazol-5-one (MIO), which is formed autocatalytically by cyclization and dehydration of residues Ala-Ser-Gly.

The protein localises to the cytoplasm. The enzyme catalyses L-histidine = trans-urocanate + NH4(+). Its pathway is amino-acid degradation; L-histidine degradation into L-glutamate; N-formimidoyl-L-glutamate from L-histidine: step 1/3. The sequence is that of Histidine ammonia-lyase from Aromatoleum aromaticum (strain DSM 19018 / LMG 30748 / EbN1) (Azoarcus sp. (strain EbN1)).